Consider the following 526-residue polypeptide: Dual specificity tyrosine-phosphorylation-regulated kinase 2 (526 aa).

Composition is skewed to polar residues over residues 30–40 and 60–70; these read TTQPNGLTTLG and GSSSSLKSTDG. The segment at 30–76 is disordered; it reads TTQPNGLTTLGKSGLPVVQDRQSESAHRRQGSSSSLKSTDGTGKVKA. Thr-31 is subject to Phosphothreonine; by ATM. The Nuclear localization signal signature appears at 114–116; the sequence is KKR. Residues 147–460 enclose the Protein kinase domain; sequence YEVLKVIGKG…PSQALRHPWL (314 aa). ATP is bound by residues 153–161, Lys-176, and 226–229; these read IGKGSFGQV and FELL. Residue Asp-273 is the Proton acceptor of the active site. Tyr-307 is modified (phosphotyrosine). Ser-367 bears the Phosphoserine; by ATM mark. A disordered region spans residues 462 to 499; the sequence is RRLPKPPTGEKASAKRITESTGAITSISKLPPTSSSAS. Residues 480–499 show a composition bias toward polar residues; it reads ESTGAITSISKLPPTSSSAS.

The protein belongs to the protein kinase superfamily. CMGC Ser/Thr protein kinase family. MNB/DYRK subfamily. Interacts with MDM2. It depends on Mg(2+) as a cofactor. The cofactor is Mn(2+). Phosphorylated on serine/threonine residues. Phosphorylation on Thr-31 and Ser-367 by ATM in response to genotoxic stress disrupts MDM2 binding and prevents MDM2-mediated ubiquitination and subsequent proteasome degradation, thus promoting p53/TP53-mediated apoptosis. Post-translationally, ubiquitination in nucleus by MDM2 in normal conditions leads to proteasome degradation.

The protein resides in the cytoplasm. Its subcellular location is the nucleus. It carries out the reaction L-seryl-[protein] + ATP = O-phospho-L-seryl-[protein] + ADP + H(+). The enzyme catalyses L-threonyl-[protein] + ATP = O-phospho-L-threonyl-[protein] + ADP + H(+). The catalysed reaction is L-tyrosyl-[protein] + ATP = O-phospho-L-tyrosyl-[protein] + ADP + H(+). Its activity is regulated as follows. Autophosphorylates on tyrosine residues. In terms of biological role, serine/threonine-protein kinase involved in the control of mitotic transition and the regulation of cellular growth and/or development. The polypeptide is Dual specificity tyrosine-phosphorylation-regulated kinase 2 (Gallus gallus (Chicken)).